Here is a 799-residue protein sequence, read N- to C-terminus: Leucine--tRNA ligase (799 aa).

A 'HIGH' region motif is present at residues 39-50 (PYPSGAGLHMGH). The 'KMSKS' region motif lies at 575–579 (KMSKS). Lys-578 lines the ATP pocket.

Belongs to the class-I aminoacyl-tRNA synthetase family.

The protein resides in the cytoplasm. It catalyses the reaction tRNA(Leu) + L-leucine + ATP = L-leucyl-tRNA(Leu) + AMP + diphosphate. In Malacoplasma penetrans (strain HF-2) (Mycoplasma penetrans), this protein is Leucine--tRNA ligase.